Reading from the N-terminus, the 135-residue chain is Galectin-1 (135 aa).

The residue at position 2 (alanine 2) is an N-acetylalanine. The Galectin domain occupies 4 to 135 (GLVASNLNLK…DFKIKCVAFD (132 aa)). Lysine 13 and lysine 29 each carry N6-acetyllysine. Serine 30 carries the phosphoserine modification. Residues 45 to 49 (HFNPR), histidine 53, asparagine 62, and 69 to 72 (WGTE) each bind a beta-D-galactoside. N6-acetyllysine; alternate is present on lysine 108. An N6-succinyllysine; alternate modification is found at lysine 108. Lysine 128 is modified (N6-acetyllysine).

In terms of assembly, homodimer. Binds LGALS3BP. Interacts with CD2, CD3, CD4, CD6, CD7, CD43, ALCAM and CD45. Interacts with laminin (via poly-N-acetyllactosamine). Interacts with SUSD2.

Its subcellular location is the secreted. The protein localises to the extracellular space. It is found in the extracellular matrix. Lectin that binds beta-galactoside and a wide array of complex carbohydrates. Plays a role in regulating apoptosis, cell proliferation and cell differentiation. Inhibits CD45 protein phosphatase activity and therefore the dephosphorylation of Lyn kinase. Strong inducer of T-cell apoptosis. In Pongo abelii (Sumatran orangutan), this protein is Galectin-1 (LGALS1).